The sequence spans 279 residues: Expansin-A22 (279 aa).

The signal sequence occupies residues 1–27; it reads MKLLEKMIYVEFLMIIMVIWVVPMSYG. One can recognise an Expansin-like EG45 domain in the interval 76–186; it reads QGACGYGNLF…RRIPCSKTGG (111 aa). The region spanning 196–275 is the Expansin-like CBD domain; it reads YFLMVLIYNV…NWGFGQTFDG (80 aa).

It belongs to the expansin family. Expansin A subfamily.

The protein resides in the secreted. Its subcellular location is the cell wall. It localises to the membrane. Causes loosening and extension of plant cell walls by disrupting non-covalent bonding between cellulose microfibrils and matrix glucans. No enzymatic activity has been found. This Arabidopsis thaliana (Mouse-ear cress) protein is Expansin-A22 (EXPA22).